Consider the following 1605-residue polypeptide: Pentafunctional AROM polypeptide (1605 aa).

A 3-dehydroquinate synthase region spans residues 1–384; it reads MTGPTKISIL…YEPRASVVPN (384 aa). Residues 44–46, 81–84, 114–116, and D119 contribute to the NAD(+) site; these read DTN, EVSK, and GGV. Residue R130 coordinates 7-phospho-2-dehydro-3-deoxy-D-arabino-heptonate. 139 to 140 contributes to the NAD(+) binding site; that stretch reads TT. D146 and K152 together coordinate 7-phospho-2-dehydro-3-deoxy-D-arabino-heptonate. K161 is an NAD(+) binding site. N162 lines the 7-phospho-2-dehydro-3-deoxy-D-arabino-heptonate pocket. NAD(+)-binding positions include 179 to 182 and N190; that span reads FLET. Position 194 (E194) interacts with Zn(2+). 7-phospho-2-dehydro-3-deoxy-D-arabino-heptonate is bound by residues 194 to 197 and K250; that span reads EVIK. The active-site Proton acceptor; for 3-dehydroquinate synthase activity is the E260. Residues 264-268 and H271 contribute to the 7-phospho-2-dehydro-3-deoxy-D-arabino-heptonate site; that span reads RNLLN. Zn(2+) is bound at residue H271. H275 serves as the catalytic Proton acceptor; for 3-dehydroquinate synthase activity. 7-phospho-2-dehydro-3-deoxy-D-arabino-heptonate is bound by residues H287 and K356. H287 provides a ligand contact to Zn(2+). Residues 397–842 are EPSP synthase; that stretch reads VHPGVSTTSE…WDTLRQKFAV (446 aa). The active-site For EPSP synthase activity is C824. Positions 864–1055 are shikimate kinase; that stretch reads SASVFIIGMR…KKKQHSFFVS (192 aa). 871–878 contacts ATP; the sequence is GMRGAGKT. The interval 1056–1276 is 3-dehydroquinase; sequence LTLPDVRGAD…AAPGQLSATD (221 aa). H1179 acts as the Proton acceptor; for 3-dehydroquinate dehydratase activity in catalysis. Residue K1207 is the Schiff-base intermediate with substrate; for 3-dehydroquinate dehydratase activity of the active site. Residues 1289–1605 form a shikimate dehydrogenase region; it reads KKRFALFGSP…LSGRTMLTCS (317 aa).

It in the N-terminal section; belongs to the sugar phosphate cyclases superfamily. Dehydroquinate synthase family. In the 2nd section; belongs to the EPSP synthase family. The protein in the 3rd section; belongs to the shikimate kinase family. This sequence in the 4th section; belongs to the type-I 3-dehydroquinase family. It in the C-terminal section; belongs to the shikimate dehydrogenase family. In terms of assembly, homodimer. Requires Zn(2+) as cofactor.

It localises to the cytoplasm. It carries out the reaction 7-phospho-2-dehydro-3-deoxy-D-arabino-heptonate = 3-dehydroquinate + phosphate. The enzyme catalyses 3-dehydroquinate = 3-dehydroshikimate + H2O. The catalysed reaction is shikimate + NADP(+) = 3-dehydroshikimate + NADPH + H(+). It catalyses the reaction shikimate + ATP = 3-phosphoshikimate + ADP + H(+). It carries out the reaction 3-phosphoshikimate + phosphoenolpyruvate = 5-O-(1-carboxyvinyl)-3-phosphoshikimate + phosphate. Its pathway is metabolic intermediate biosynthesis; chorismate biosynthesis; chorismate from D-erythrose 4-phosphate and phosphoenolpyruvate: step 2/7. It functions in the pathway metabolic intermediate biosynthesis; chorismate biosynthesis; chorismate from D-erythrose 4-phosphate and phosphoenolpyruvate: step 3/7. It participates in metabolic intermediate biosynthesis; chorismate biosynthesis; chorismate from D-erythrose 4-phosphate and phosphoenolpyruvate: step 4/7. The protein operates within metabolic intermediate biosynthesis; chorismate biosynthesis; chorismate from D-erythrose 4-phosphate and phosphoenolpyruvate: step 5/7. Its pathway is metabolic intermediate biosynthesis; chorismate biosynthesis; chorismate from D-erythrose 4-phosphate and phosphoenolpyruvate: step 6/7. The AROM polypeptide catalyzes 5 consecutive enzymatic reactions in prechorismate polyaromatic amino acid biosynthesis. This chain is Pentafunctional AROM polypeptide, found in Aspergillus fumigatus (strain CBS 144.89 / FGSC A1163 / CEA10) (Neosartorya fumigata).